Here is a 662-residue protein sequence, read N- to C-terminus: Protein-arginine deiminase type-1 (662 aa).

Positions 153, 155, 157, 164, 175, 178, 350, 352, 363, 370, 371, 374, 408, and 411 each coordinate Ca(2+). The active-site Nucleophile is the C644.

Belongs to the protein arginine deiminase family. As to quaternary structure, monomer. Ca(2+) serves as cofactor. As to expression, expressed only in the epidermis and uterus.

The protein resides in the cytoplasm. The enzyme catalyses L-arginyl-[protein] + H2O = L-citrullyl-[protein] + NH4(+). Functionally, catalyzes the deimination of arginine residues of proteins. The protein is Protein-arginine deiminase type-1 (Padi1) of Mus musculus (Mouse).